We begin with the raw amino-acid sequence, 84 residues long: Toxin Tst1 (84 aa).

The first 19 residues, 1–19, serve as a signal peptide directing secretion; sequence MKGMILFISCLLLIDIVVG. Positions 21–82 constitute an LCN-type CS-alpha/beta domain; it reads KEGYLMDHEG…VWDRATNKCG (62 aa). Disulfide bonds link Cys-31–Cys-81, Cys-35–Cys-57, Cys-43–Cys-62, and Cys-47–Cys-64. Residue Cys-81 is modified to Cysteine amide.

Expressed by the venom gland.

The protein resides in the secreted. In terms of biological role, beta toxins bind voltage-independently at site-4 of sodium channels (Nav) and shift the voltage of activation toward more negative potentials thereby affecting sodium channel activation and promoting spontaneous and repetitive firing. This toxin is active only on mammals. Is toxic to mice. This Tityus stigmurus (Brazilian scorpion) protein is Toxin Tst1.